A 200-amino-acid polypeptide reads, in one-letter code: dTTP/UTP pyrophosphatase (200 aa).

Aspartate 72 serves as the catalytic Proton acceptor.

Belongs to the Maf family. YhdE subfamily. A divalent metal cation serves as cofactor.

It localises to the cytoplasm. The enzyme catalyses dTTP + H2O = dTMP + diphosphate + H(+). It catalyses the reaction UTP + H2O = UMP + diphosphate + H(+). In terms of biological role, nucleoside triphosphate pyrophosphatase that hydrolyzes dTTP and UTP. May have a dual role in cell division arrest and in preventing the incorporation of modified nucleotides into cellular nucleic acids. This is dTTP/UTP pyrophosphatase from Pseudomonas savastanoi pv. phaseolicola (strain 1448A / Race 6) (Pseudomonas syringae pv. phaseolicola (strain 1448A / Race 6)).